A 31-amino-acid polypeptide reads, in one-letter code: MESFAYILILTLAIATLFFAIAFRDPPKIGK.

The chain crosses the membrane as a helical span at residues 3 to 23; sequence SFAYILILTLAIATLFFAIAF.

Belongs to the PsbT family. In terms of assembly, PSII is composed of 1 copy each of membrane proteins PsbA, PsbB, PsbC, PsbD, PsbE, PsbF, PsbH, PsbI, PsbJ, PsbK, PsbL, PsbM, PsbT, PsbX, PsbY, PsbZ, Psb30/Ycf12, peripheral proteins PsbO, CyanoQ (PsbQ), PsbU, PsbV and a large number of cofactors. It forms dimeric complexes.

The protein resides in the cellular thylakoid membrane. Found at the monomer-monomer interface of the photosystem II (PS II) dimer, plays a role in assembly and dimerization of PSII. PSII is a light-driven water plastoquinone oxidoreductase, using light energy to abstract electrons from H(2)O, generating a proton gradient subsequently used for ATP formation. This chain is Photosystem II reaction center protein T, found in Synechococcus sp. (strain WH7803).